The primary structure comprises 632 residues: Fem-3 mRNA-binding factor 2 (632 aa).

Residues 1-11 (MDQSKMRRTNQ) show a composition bias toward basic residues. A disordered region spans residues 1-37 (MDQSKMRRTNQFRKTSQKPPSTGIDSYPTPAQSPMAQ). A compositionally biased stretch (polar residues) spans 12 to 35 (FRKTSQKPPSTGIDSYPTPAQSPM). The PUM-HD domain occupies 162–566 (TRSNNVLPTW…KMIETLANLR (405 aa)). Pumilio repeat units follow at residues 187 to 225 (EVLD…QLFE), 226 to 264 (QVIG…GYTK), 271 to 307 (NFIS…KLVQ), 308 to 332 (ALPR…QKVV), 345 to 384 (DFVA…DLTS), 400 to 436 (SVTN…CIIE), 438 to 473 (CLMR…EMMD), and 484 to 521 (DTGK…RQTK). The interval 609 to 632 (MLEPRSNKSSVSVKFSSSGSHGDD) is disordered. The span at 615 to 632 (NKSSVSVKFSSSGSHGDD) shows a compositional bias: low complexity.

In terms of assembly, interacts (via C-terminus) with gld-3 isoform A in an RNA-independent manner. Interacts with dlc-1, and is required for the localization of fbf-2 to P granules. Interacts (via RNA-binding domain) with lst-1, probably displaces bound auto-inhibitory C-terminal tail and alters its RNA-binding affinity. Expressed specifically in the germline (at protein level).

It localises to the cytoplasm. It is found in the cytoplasmic granule. RNA-binding protein that binds to the consensus sequence 5'-UGUGCCAUA-3' in mRNA 3'-UTRs. Involved in the control of stem cells and sex determination in the C.elegans hermaphrodite germline. May also play a role in the hermaphrodite germline proliferation and oogenesis. By binding to the 3'-UTR, represses phosphatase lip-1 expression in the distal part of the germline mitotic zone. Binds specifically to the regulatory region of fem-3 3'-UTR and mediates the sperm/oocyte switch. Negatively regulates gld-3 expression possibly by directly binding to two sites within the gld-3 isoform b 3'-UTR. Suppresses germline tumor formation by preventing the dedifferentiation of secondary spermatocytes. C-terminal disordered region probably auto-inhibits RNA binding; auto-inhibition may be reversed by interaction with lst-1. The sequence is that of Fem-3 mRNA-binding factor 2 from Caenorhabditis elegans.